Consider the following 263-residue polypeptide: Protein TILLER ANGLE CONTROL 1 (263 aa).

The short motif at glycine 55–threonine 61 is the IGT motif element. Residues glycine 243 to alanine 263 form a disordered region.

This sequence belongs to the TAC family. In terms of tissue distribution, highly expressed in leaf sheath pulvinus. Expressed in shoot apical meristem and leaves.

Functionally, involved in the regulation of leaf growth angle. Promotes horizontal shoot growth. This is Protein TILLER ANGLE CONTROL 1 from Zea mays (Maize).